The primary structure comprises 462 residues: Argininosuccinate lyase (462 aa).

Belongs to the lyase 1 family. Argininosuccinate lyase subfamily.

It localises to the cytoplasm. The enzyme catalyses 2-(N(omega)-L-arginino)succinate = fumarate + L-arginine. The protein operates within amino-acid biosynthesis; L-arginine biosynthesis; L-arginine from L-ornithine and carbamoyl phosphate: step 3/3. This chain is Argininosuccinate lyase, found in Methylobacterium nodulans (strain LMG 21967 / CNCM I-2342 / ORS 2060).